The sequence spans 248 residues: DNA repair protein RecO (248 aa).

The protein belongs to the RecO family.

Its function is as follows. Involved in DNA repair and RecF pathway recombination. This is DNA repair protein RecO from Bacillus cereus (strain B4264).